The following is a 205-amino-acid chain: Metal-independent carbonic anhydrase (205 aa).

The N-terminal stretch at 1 to 24 (MNLFKPRILVLFAATALISGIAIV) is a signal peptide. Threonine 106 and tyrosine 124 together coordinate hydrogencarbonate.

The protein belongs to the iota-class carbonic anhydrase family. In terms of assembly, homotetramer; dimer of dimers. Does not require a metal cofactor. serves as cofactor.

The catalysed reaction is hydrogencarbonate + H(+) = CO2 + H2O. Activity is not affected by EDTA or 2,6-pyridinedicarboxylic acid (PDA). Activity is not affected by addition of most divalent metal ions, except zinc ions which decrease the activity. Inhibited by the iodide ion. Its function is as follows. Catalyzes the hydration of carbon dioxide (CO2) to bicarbonate (HCO3(-)). Has only very low bicarbonate dehydration activity. May function even in metal-poor environments. This chain is Metal-independent carbonic anhydrase, found in Nostoc sp. (strain PCC 7120 / SAG 25.82 / UTEX 2576).